Consider the following 500-residue polypeptide: Taxoid 7-beta-hydroxylase (500 aa).

Residues 24 to 44 (PAILSTALTAIAGIIVLLVIT) form a helical membrane-spanning segment. Cys446 contributes to the heme binding site.

Belongs to the cytochrome P450 family.

The protein resides in the microsome membrane. The enzyme catalyses taxusin + reduced [NADPH--hemoprotein reductase] + O2 = 7beta-hydroxytaxusin + oxidized [NADPH--hemoprotein reductase] + H2O + H(+). It catalyses the reaction 2alpha-hydroxytaxusin + reduced [NADPH--hemoprotein reductase] + O2 = 2alpha,7beta-dihydroxytaxusin + oxidized [NADPH--hemoprotein reductase] + H2O + H(+). It carries out the reaction 7beta-hydroxytaxusin + reduced [NADPH--hemoprotein reductase] + O2 = 2alpha,7beta-dihydroxytaxusin + oxidized [NADPH--hemoprotein reductase] + H2O + H(+). It participates in alkaloid biosynthesis; taxol biosynthesis. Its function is as follows. Catalyzes the conversion of taxusin to 7-beta-hydroxytaxusin in taxol biosynthesis. Catalyzes the conversion of 2-alpha-hydroxytaxusin to 2-alpha-7-beta-hydroxytaxusin in taxol biosynthesis. This chain is Taxoid 7-beta-hydroxylase, found in Taxus cuspidata (Japanese yew).